The chain runs to 236 residues: Small ribosomal subunit protein uS2c (236 aa).

It belongs to the universal ribosomal protein uS2 family.

The protein resides in the plastid. It localises to the chloroplast. The chain is Small ribosomal subunit protein uS2c (rps2) from Cucumis sativus (Cucumber).